The chain runs to 295 residues: Pantothenate synthetase (295 aa).

An ATP-binding site is contributed by 29–36; that stretch reads MGALHSGH. His-36 (proton donor) is an active-site residue. Gln-60 contributes to the (R)-pantoate binding site. Residue Gln-60 coordinates beta-alanine. 158 to 161 is an ATP binding site; it reads GQKD. A (R)-pantoate-binding site is contributed by Gln-164. Residues Val-187 and 195–198 each bind ATP; that span reads LSSR.

This sequence belongs to the pantothenate synthetase family. As to quaternary structure, homodimer.

It is found in the cytoplasm. The enzyme catalyses (R)-pantoate + beta-alanine + ATP = (R)-pantothenate + AMP + diphosphate + H(+). Its pathway is cofactor biosynthesis; (R)-pantothenate biosynthesis; (R)-pantothenate from (R)-pantoate and beta-alanine: step 1/1. Catalyzes the condensation of pantoate with beta-alanine in an ATP-dependent reaction via a pantoyl-adenylate intermediate. This Paenarthrobacter aurescens (strain TC1) protein is Pantothenate synthetase.